We begin with the raw amino-acid sequence, 424 residues long: Enolase (424 aa).

A (2R)-2-phosphoglycerate-binding site is contributed by Q165. The active-site Proton donor is the E207. 3 residues coordinate Mg(2+): D244, E283, and D310. 4 residues coordinate (2R)-2-phosphoglycerate: K335, R364, S365, and K386. K335 (proton acceptor) is an active-site residue.

It belongs to the enolase family. Requires Mg(2+) as cofactor.

Its subcellular location is the cytoplasm. The protein localises to the secreted. It is found in the cell surface. It catalyses the reaction (2R)-2-phosphoglycerate = phosphoenolpyruvate + H2O. It functions in the pathway carbohydrate degradation; glycolysis; pyruvate from D-glyceraldehyde 3-phosphate: step 4/5. Catalyzes the reversible conversion of 2-phosphoglycerate (2-PG) into phosphoenolpyruvate (PEP). It is essential for the degradation of carbohydrates via glycolysis. The sequence is that of Enolase from Chlamydia abortus (strain DSM 27085 / S26/3) (Chlamydophila abortus).